Consider the following 161-residue polypeptide: ATP synthase subunit b 1 (161 aa).

A helical membrane pass occupies residues 6–26 (ETWVAIAFVILMVVFGYLGVF).

Belongs to the ATPase B chain family. F-type ATPases have 2 components, F(1) - the catalytic core - and F(0) - the membrane proton channel. F(1) has five subunits: alpha(3), beta(3), gamma(1), delta(1), epsilon(1). F(0) has three main subunits: a(1), b(2) and c(10-14). The alpha and beta chains form an alternating ring which encloses part of the gamma chain. F(1) is attached to F(0) by a central stalk formed by the gamma and epsilon chains, while a peripheral stalk is formed by the delta and b chains.

Its subcellular location is the cell inner membrane. Its function is as follows. F(1)F(0) ATP synthase produces ATP from ADP in the presence of a proton or sodium gradient. F-type ATPases consist of two structural domains, F(1) containing the extramembraneous catalytic core and F(0) containing the membrane proton channel, linked together by a central stalk and a peripheral stalk. During catalysis, ATP synthesis in the catalytic domain of F(1) is coupled via a rotary mechanism of the central stalk subunits to proton translocation. Functionally, component of the F(0) channel, it forms part of the peripheral stalk, linking F(1) to F(0). This is ATP synthase subunit b 1 from Bradyrhizobium diazoefficiens (strain JCM 10833 / BCRC 13528 / IAM 13628 / NBRC 14792 / USDA 110).